A 719-amino-acid polypeptide reads, in one-letter code: Fatty acid oxidation complex subunit alpha (719 aa).

The interval 1–190 (MIYQGNRITV…KLGLVDAVVA (190 aa)) is enoyl-CoA hydratase/isomerase. Asp-298 serves as a coordination point for substrate. The interval 313–719 (HDINEAAVLG…AAGETFYPKA (407 aa)) is 3-hydroxyacyl-CoA dehydrogenase. NAD(+) contacts are provided by residues Met-326, Asp-345, 402-404 (VVE), Lys-409, and Ser-431. The active-site For 3-hydroxyacyl-CoA dehydrogenase activity is His-452. Position 455 (Asn-455) interacts with NAD(+). Asn-502 is a substrate binding site.

It in the N-terminal section; belongs to the enoyl-CoA hydratase/isomerase family. The protein in the C-terminal section; belongs to the 3-hydroxyacyl-CoA dehydrogenase family. Heterotetramer of two alpha chains (FadB) and two beta chains (FadA).

The enzyme catalyses a (3S)-3-hydroxyacyl-CoA + NAD(+) = a 3-oxoacyl-CoA + NADH + H(+). The catalysed reaction is a (3S)-3-hydroxyacyl-CoA = a (2E)-enoyl-CoA + H2O. It catalyses the reaction a 4-saturated-(3S)-3-hydroxyacyl-CoA = a (3E)-enoyl-CoA + H2O. It carries out the reaction (3S)-3-hydroxybutanoyl-CoA = (3R)-3-hydroxybutanoyl-CoA. The enzyme catalyses a (3Z)-enoyl-CoA = a 4-saturated (2E)-enoyl-CoA. The catalysed reaction is a (3E)-enoyl-CoA = a 4-saturated (2E)-enoyl-CoA. It participates in lipid metabolism; fatty acid beta-oxidation. Functionally, involved in the aerobic and anaerobic degradation of long-chain fatty acids via beta-oxidation cycle. Catalyzes the formation of 3-oxoacyl-CoA from enoyl-CoA via L-3-hydroxyacyl-CoA. It can also use D-3-hydroxyacyl-CoA and cis-3-enoyl-CoA as substrate. The chain is Fatty acid oxidation complex subunit alpha from Psychrobacter sp. (strain PRwf-1).